The sequence spans 78 residues: Translation initiation factor IF-1, chloroplastic (78 aa).

The S1-like domain occupies 1 to 72 (MKKQNLIEME…TKGRITYRLR (72 aa)).

This sequence belongs to the IF-1 family. As to quaternary structure, component of the 30S ribosomal translation pre-initiation complex which assembles on the 30S ribosome in the order IF-2 and IF-3, IF-1 and N-formylmethionyl-tRNA(fMet); mRNA recruitment can occur at any time during PIC assembly.

It localises to the plastid. It is found in the chloroplast. In terms of biological role, one of the essential components for the initiation of protein synthesis. Stabilizes the binding of IF-2 and IF-3 on the 30S subunit to which N-formylmethionyl-tRNA(fMet) subsequently binds. Helps modulate mRNA selection, yielding the 30S pre-initiation complex (PIC). Upon addition of the 50S ribosomal subunit IF-1, IF-2 and IF-3 are released leaving the mature 70S translation initiation complex. This is Translation initiation factor IF-1, chloroplastic from Chaetosphaeridium globosum (Charophycean green alga).